A 447-amino-acid polypeptide reads, in one-letter code: Na(+)-translocating NADH-quinone reductase subunit A (447 aa).

Belongs to the NqrA family. Composed of six subunits; NqrA, NqrB, NqrC, NqrD, NqrE and NqrF.

It carries out the reaction a ubiquinone + n Na(+)(in) + NADH + H(+) = a ubiquinol + n Na(+)(out) + NAD(+). In terms of biological role, NQR complex catalyzes the reduction of ubiquinone-1 to ubiquinol by two successive reactions, coupled with the transport of Na(+) ions from the cytoplasm to the periplasm. NqrA to NqrE are probably involved in the second step, the conversion of ubisemiquinone to ubiquinol. This chain is Na(+)-translocating NADH-quinone reductase subunit A, found in Neisseria gonorrhoeae (strain ATCC 700825 / FA 1090).